A 155-amino-acid polypeptide reads, in one-letter code: V-type proton ATPase 16 kDa proteolipid subunit c (155 aa).

Residues 1–10 (MSEAKNGPEY) are Lumenal-facing. The helical transmembrane segment at 11-33 (ASFFAVMGASAAMVFSALGAAYG) threads the bilayer. Topologically, residues 34 to 55 (TAKSGTGIAAMSVMRPEMIMKS) are cytoplasmic. The helical transmembrane segment at 56 to 76 (IIPVVMAGIIAIYGLVVAVLI) threads the bilayer. The Lumenal portion of the chain corresponds to 77-92 (ANSLNDGISLYRSFLQ). The helical transmembrane segment at 93–114 (LGAGLSVGLSGLAAGFAIGIVG) threads the bilayer. The Cytoplasmic segment spans residues 115-131 (DAGVRGTAQQPRLFVGM). A helical membrane pass occupies residues 132–152 (ILILIFAEVLGLYGLIVALIL). The Lumenal portion of the chain corresponds to 153–155 (STK).

Belongs to the V-ATPase proteolipid subunit family. In terms of assembly, V-ATPase is a heteromultimeric enzyme made up of two complexes: the ATP-hydrolytic V1 complex and the proton translocation V0 complex. The V1 complex consists of three catalytic AB heterodimers that form a heterohexamer, three peripheral stalks each consisting of EG heterodimers, one central rotor including subunits D and F, and the regulatory subunits C and H. The proton translocation complex V0 consists of the proton transport subunit a, a ring of proteolipid subunits c9c'', rotary subunit d, subunits e and f, and the accessory subunits ATP6AP1/Ac45 and ATP6AP2/PRR. Interacts with the V0 complex V-ATPase subunit a4 ATP6V0A4. Interacts with LASS2. Interacts with RNF182; this interaction leads to ubiquitination and degradation via the proteasome pathway. Ubiquitinated by RNF182, leading to its degradation via the ubiquitin-proteasome pathway. As to expression, expressed in brain (at protein level).

It is found in the cytoplasmic vesicle. Its subcellular location is the clathrin-coated vesicle membrane. It localises to the secretory vesicle. The protein localises to the synaptic vesicle membrane. Proton-conducting pore forming subunit of the V0 complex of vacuolar(H+)-ATPase (V-ATPase), a multisubunit enzyme composed of a peripheral complex (V1) that hydrolyzes ATP and a membrane integral complex (V0) that translocates protons. V-ATPase is responsible for acidifying and maintaining the pH of intracellular compartments and in some cell types, is targeted to the plasma membrane, where it is responsible for acidifying the extracellular environment. This is V-type proton ATPase 16 kDa proteolipid subunit c (ATP6V0C) from Bos taurus (Bovine).